A 615-amino-acid chain; its full sequence is Elongation factor 4 (615 aa).

The region spanning 14–200 is the tr-type G domain; it reads SKIRNFCIIA…KVAELIPAPT (187 aa). GTP-binding positions include 26–31 and 147–150; these read DHGKST and NKID.

This sequence belongs to the TRAFAC class translation factor GTPase superfamily. Classic translation factor GTPase family. LepA subfamily.

It localises to the cell membrane. It catalyses the reaction GTP + H2O = GDP + phosphate + H(+). Its function is as follows. Required for accurate and efficient protein synthesis under certain stress conditions. May act as a fidelity factor of the translation reaction, by catalyzing a one-codon backward translocation of tRNAs on improperly translocated ribosomes. Back-translocation proceeds from a post-translocation (POST) complex to a pre-translocation (PRE) complex, thus giving elongation factor G a second chance to translocate the tRNAs correctly. Binds to ribosomes in a GTP-dependent manner. The sequence is that of Elongation factor 4 from Corynebacterium aurimucosum (strain ATCC 700975 / DSM 44827 / CIP 107346 / CN-1) (Corynebacterium nigricans).